A 297-amino-acid chain; its full sequence is Tyrosine recombinase XerD (297 aa).

The Core-binding (CB) domain occupies 1 to 87 (MLEYAIEDFF…SIRSFHQFLI (87 aa)). Positions 108–291 (KLPDILSQDE…TKARLKDMYQ (184 aa)) constitute a Tyr recombinase domain. Residues Arg-147, Lys-171, His-243, Arg-246, and His-269 contribute to the active site. Residue Tyr-278 is the O-(3'-phospho-DNA)-tyrosine intermediate of the active site.

The protein belongs to the 'phage' integrase family. XerD subfamily. Forms a cyclic heterotetrameric complex composed of two molecules of XerC and two molecules of XerD.

It is found in the cytoplasm. In terms of biological role, site-specific tyrosine recombinase, which acts by catalyzing the cutting and rejoining of the recombining DNA molecules. The XerC-XerD complex is essential to convert dimers of the bacterial chromosome into monomers to permit their segregation at cell division. It also contributes to the segregational stability of plasmids. The protein is Tyrosine recombinase XerD of Oceanobacillus iheyensis (strain DSM 14371 / CIP 107618 / JCM 11309 / KCTC 3954 / HTE831).